Consider the following 420-residue polypeptide: Light-independent protochlorophyllide reductase subunit N (420 aa).

The [4Fe-4S] cluster site is built by C21, C46, and C103.

Belongs to the BchN/ChlN family. In terms of assembly, protochlorophyllide reductase is composed of three subunits; BchL, BchN and BchB. Forms a heterotetramer of two BchB and two BchN subunits. Requires [4Fe-4S] cluster as cofactor.

It carries out the reaction chlorophyllide a + oxidized 2[4Fe-4S]-[ferredoxin] + 2 ADP + 2 phosphate = protochlorophyllide a + reduced 2[4Fe-4S]-[ferredoxin] + 2 ATP + 2 H2O. Its pathway is porphyrin-containing compound metabolism; bacteriochlorophyll biosynthesis (light-independent). Component of the dark-operative protochlorophyllide reductase (DPOR) that uses Mg-ATP and reduced ferredoxin to reduce ring D of protochlorophyllide (Pchlide) to form chlorophyllide a (Chlide). This reaction is light-independent. The NB-protein (BchN-BchB) is the catalytic component of the complex. This is Light-independent protochlorophyllide reductase subunit N from Chlorobium phaeobacteroides (strain DSM 266 / SMG 266 / 2430).